The sequence spans 580 residues: Glypican-3 (580 aa).

The N-terminal stretch at 1 to 24 is a signal peptide; it reads MAGTVRTACLVVAMLLSLDFPGQA. Gln-25 is subject to Pyrrolidone carboxylic acid. 7 disulfide bridges follow: Cys-35-Cys-72, Cys-65-Cys-262, Cys-73-Cys-265, Cys-197-Cys-349, Cys-252-Cys-285, Cys-274-Cys-422, and Cys-278-Cys-410. Residues Asn-124 and Asn-241 are each glycosylated (N-linked (GlcNAc...) asparagine). Ser-352 is subject to Phosphoserine. N-linked (GlcNAc...) asparagine glycosylation occurs at Asn-418. Ser-495 and Ser-509 each carry an O-linked (Xyl...) (glycosaminoglycan) serine glycan. The GPI-anchor amidated asparagine moiety is linked to residue Asn-554. A propeptide spans 555–580 (removed in mature form); sequence LGNVHSPLKLLTSMAISVVCFFFLVH.

This sequence belongs to the glypican family. In terms of assembly, heterodimer; disulfide-linked. Cleavage by a furin-like convertase results in production of alpha and beta chains which form a disulfide-linked heterodimer. Interacts with DPP4. Interacts with FGF2. Interacts with WNT5A. Also interacts with WNT3A and WNT7B. Interacts with hedgehog protein SHH; the heparan sulfate chains are not required for the interaction. Also interacts with hedgehog protein IHH. Interacts with CD81. Interacts with Wnt receptors FZD4, FZD7 and FZD8; the heparan sulfate chains are required for the interaction. O-glycosylated; contains heparan sulfate and/or chondroitin sulfate. In terms of processing, cleaved intracellularly by a furin-like convertase to generate 2 subunits, alpha and beta, which remain associated through disulfide bonds and are associated with the cell surface via the GPI-anchor. This processing is essential for its role in inhibition of hedgehog signaling. A second proteolytic event may result in cleavage of the protein on the cell surface, separating it from the GPI-anchor and leading to its shedding from the cell surface.

It is found in the cell membrane. Its function is as follows. Cell surface proteoglycan. Negatively regulates the hedgehog signaling pathway when attached via the GPI-anchor to the cell surface by competing with the hedgehog receptor PTC1 for binding to hedgehog proteins. Binding to the hedgehog protein SHH triggers internalization of the complex by endocytosis and its subsequent lysosomal degradation. Positively regulates the canonical Wnt signaling pathway by binding to the Wnt receptor Frizzled and stimulating the binding of the Frizzled receptor to Wnt ligands. Positively regulates the non-canonical Wnt signaling pathway. Binds to CD81 which decreases the availability of free CD81 for binding to the transcriptional repressor HHEX, resulting in nuclear translocation of HHEX and transcriptional repression. Inhibits the dipeptidyl peptidase activity of DPP4. Plays a role in limb patterning and skeletal development by controlling the cellular response to BMP4. Modulates the effects of growth factors BMP2, BMP7 and FGF7 on renal branching morphogenesis. Required for coronary vascular development. Plays a role in regulating cell movements during gastrulation. The sequence is that of Glypican-3 (GPC3) from Pan troglodytes (Chimpanzee).